Consider the following 537-residue polypeptide: Biotin carboxylase, chloroplastic (537 aa).

The transit peptide at 1–71 (MDASMITNSK…ATSGGLGVTC (71 aa)) directs the protein to the chloroplast. Residues Lys188, Lys230, 236 to 237 (GG), 272 to 275 (EKFV), and His280 each bind ATP. Residues 192–389 (RETMKNAGVP…LIEEQIRVAM (198 aa)) form the ATP-grasp domain. Residue Lys309 participates in hydrogencarbonate binding. ATP contacts are provided by Glu347 and Glu360. Glu347, Glu360, and Asn362 together coordinate Mg(2+). Glu347, Glu360, and Asn362 together coordinate Mn(2+). Residues Arg364, Val367, and Arg410 each contribute to the hydrogencarbonate site. Residue Arg364 is part of the active site. Arg410 is a biotin binding site.

Acetyl-CoA carboxylase is a heterohexamer composed of biotin carboxyl carrier protein, biotin carboxylase and two subunits each of ACCase subunit alpha and ACCase plastid-coded subunit beta (accD). The cofactor is Mg(2+). It depends on Mn(2+) as a cofactor. As to expression, accumulates in fatty acids synthesizing tissues. Mostly expressed in siliques, developing leaves, and flowers, present in roots and embryos (especially at torpedo stage), and, to a lower extent, in mature leaves.

It is found in the plastid. The protein resides in the chloroplast. It carries out the reaction N(6)-biotinyl-L-lysyl-[protein] + hydrogencarbonate + ATP = N(6)-carboxybiotinyl-L-lysyl-[protein] + ADP + phosphate + H(+). It participates in lipid metabolism; malonyl-CoA biosynthesis; malonyl-CoA from acetyl-CoA: step 1/1. This protein is a component of the acetyl coenzyme A carboxylase complex; first, biotin carboxylase catalyzes the carboxylation of the carrier protein and then the transcarboxylase transfers the carboxyl group to form malonyl-CoA. This chain is Biotin carboxylase, chloroplastic (CAC2), found in Arabidopsis thaliana (Mouse-ear cress).